The sequence spans 262 residues: Acyl-[acyl-carrier-protein]--UDP-N-acetylglucosamine O-acyltransferase (262 aa).

It belongs to the transferase hexapeptide repeat family. LpxA subfamily. As to quaternary structure, homotrimer.

The protein localises to the cytoplasm. The enzyme catalyses a (3R)-hydroxyacyl-[ACP] + UDP-N-acetyl-alpha-D-glucosamine = a UDP-3-O-[(3R)-3-hydroxyacyl]-N-acetyl-alpha-D-glucosamine + holo-[ACP]. Its pathway is glycolipid biosynthesis; lipid IV(A) biosynthesis; lipid IV(A) from (3R)-3-hydroxytetradecanoyl-[acyl-carrier-protein] and UDP-N-acetyl-alpha-D-glucosamine: step 1/6. In terms of biological role, involved in the biosynthesis of lipid A, a phosphorylated glycolipid that anchors the lipopolysaccharide to the outer membrane of the cell. This is Acyl-[acyl-carrier-protein]--UDP-N-acetylglucosamine O-acyltransferase from Paraburkholderia phymatum (strain DSM 17167 / CIP 108236 / LMG 21445 / STM815) (Burkholderia phymatum).